Here is a 409-residue protein sequence, read N- to C-terminus: Evolutionarily conserved signaling intermediate in Toll pathway, mitochondrial (409 aa).

The transit peptide at 1 to 26 directs the protein to the mitochondrion; it reads MLRRAQCLLRLHGNGGHSLVSRFRNY. Disordered stretches follow at residues 27 to 53 and 383 to 409; these read ATDE…NLPA and EEIE…SRQK. Over residues 400-409 the composition is skewed to basic and acidic residues; that stretch reads QDEHISSRQK.

Belongs to the ECSIT family. As to quaternary structure, interacts with Traf6. Associates with mitochondrial complex I assembly intermediates during its biogenesis.

It is found in the cytoplasm. It localises to the nucleus. The protein resides in the mitochondrion. As part of the MCIA complex, involved in the assembly of the mitochondrial complex I. Involved in the innate immune response; promotes the production of antibacterial peptides. The chain is Evolutionarily conserved signaling intermediate in Toll pathway, mitochondrial from Drosophila melanogaster (Fruit fly).